A 465-amino-acid chain; its full sequence is Phenylalanine--tRNA ligase alpha subunit (465 aa).

L-phenylalanine is bound by residues T309, 348–350 (QLD), and F388. E390 contacts Mg(2+).

This sequence belongs to the class-II aminoacyl-tRNA synthetase family. Phe-tRNA synthetase alpha subunit type 2 subfamily. As to quaternary structure, tetramer of two alpha and two beta subunits. Requires Mg(2+) as cofactor.

The protein localises to the cytoplasm. It carries out the reaction tRNA(Phe) + L-phenylalanine + ATP = L-phenylalanyl-tRNA(Phe) + AMP + diphosphate + H(+). The protein is Phenylalanine--tRNA ligase alpha subunit of Sulfolobus acidocaldarius (strain ATCC 33909 / DSM 639 / JCM 8929 / NBRC 15157 / NCIMB 11770).